The following is a 319-amino-acid chain: Putative peptide permease protein BOV_A0351 (319 aa).

The next 6 membrane-spanning stretches (helical) occupy residues 9–29 (LLIGLGMLLALTILIFVLLQL), 102–122 (LLLMAAGLAIAIVIGVTTGII), 138–158 (LALLGISSPAFLTALLGLYVF), 182–202 (LLRHLALPALVLSIGHAALIM), 242–262 (LPVVTLIGSTIGLAVGGAIFI), and 284–304 (YPVIMGATLVIGACVIIVNIL). One can recognise an ABC transmembrane type-1 domain in the interval 98-305 (IGPTLLLMAA…ACVIIVNILT (208 aa)).

It belongs to the binding-protein-dependent transport system permease family. In terms of assembly, the complex is composed of two ATP-binding proteins (BOV_A0347 and BOV_A0348), two transmembrane proteins (BOV_A0350 and BOV_A0351) and a solute-binding protein (BOV_A0352).

The protein localises to the cell inner membrane. Its function is as follows. Probably part of an ABC transporter complex that could be involved in peptide import. Probably responsible for the translocation of the substrate across the membrane. The protein is Putative peptide permease protein BOV_A0351 of Brucella ovis (strain ATCC 25840 / 63/290 / NCTC 10512).